A 371-amino-acid polypeptide reads, in one-letter code: MTRPIEVRKVPIEHVSDAAGLADLIDAGVFSADDVIAVVGKTEGNGGVNDYTRIISTHAYRAVLEEKGTRSKEEVAQVPLVWSGGTDGVISPHATIFAYAPEGRYLPTDEPRVTVGYAMSEVLLPEDIGRPAMVEKVAAGVRVAMERAGITDPADVHYVQTKTPLLVQDTINDAERRGETVYTHNTLESMDVSNATTALGIAVALGEIEMPTAEQIFHDLSLYSSVASCSSGVELDQAQIVVVGNARGVGGRFRVGHSIMKDALDMDGVWAAIRDAGLDDMPVDCIHPRHIKGRLVNLFLKCEADPTGRVRGRRNIMLDDSDVAWHRQIKACVGGVVAAVSGDPMNFVSVAAVHQGPSGGGPVIAIVDLEA.

Residues 1 to 104 (MTRPIEVRKV…TIFAYAPEGR (104 aa)) form an RU A region. Residues Arg53 and 83–84 (SG) contribute to the substrate site. Residues 112 to 247 (RVTVGYAMSE…AQIVVVGNAR (136 aa)) form an RU B region. Residue Lys162 is part of the active site. Substrate contacts are provided by residues Asn194 and 230–231 (SS). Ser230 functions as the Nucleophile in the catalytic mechanism. The RU C stretch occupies residues 253–371 (FRVGHSIMKD…PVIAIVDLEA (119 aa)). Glu303 lines the Mg(2+) pocket. Residues Lys330 and 349 to 350 (SV) each bind substrate. Mg(2+) contacts are provided by Ala352, Gln355, Gly356, Pro357, and Gly360.

It belongs to the cyclic amide hydrolase (CyAH) family. Homotetramer.

The catalysed reaction is barbiturate + H2O = 3-oxo-3-ureidopropanoate. Its pathway is pyrimidine metabolism; uracil degradation via oxidative pathway; malonate and urea from uracil: step 2/3. In terms of biological role, responsible for the hydrolysis of barbituric acid (2,4,6-trihydroxy-1,3-pyrimidine), an intermediate in the oxidative catabolism of pyrimidines. Catalyzes the hydrolytic opening of the pyrimidine ring of barbituric acid to yield ureidomalonic acid. Can also use cyanuric acid as a substrate, albeit with lower efficiency. The chain is Barbiturase 2 from Nocardioides sp. (strain ATCC BAA-499 / JS614).